The following is a 226-amino-acid chain: Urease accessory protein UreF (226 aa).

The protein belongs to the UreF family. In terms of assembly, ureD, UreF and UreG form a complex that acts as a GTP-hydrolysis-dependent molecular chaperone, activating the urease apoprotein by helping to assemble the nickel containing metallocenter of UreC. The UreE protein probably delivers the nickel.

The protein resides in the cytoplasm. In terms of biological role, required for maturation of urease via the functional incorporation of the urease nickel metallocenter. This is Urease accessory protein UreF from Paraburkholderia xenovorans (strain LB400).